The chain runs to 327 residues: Aldo-keto reductase FVEG_12638 (327 aa).

Aspartate 51 lines the NADP(+) pocket. The active-site Proton donor is the tyrosine 56. Histidine 122 provides a ligand contact to substrate. NADP(+) contacts are provided by residues 152 to 153 (SE), 202 to 212 (GPLGHGWLVED), and 286 to 294 (ENFTSRDIE).

It belongs to the aldo/keto reductase family. Aldo/keto reductase 2 subfamily.

Its function is as follows. Aldo-keto reductase; part of the Fusarium detoxification of benzoxazolinone cluster 2 (FDB2) involved in the degradation of benzoxazolinones produced by the host plant. Maize, wheat, and rye produce the 2 benzoxazinone phytoanticipins 2,4-dihy-droxy-7-methoxy-1,4-benzoxazin-3-one (DIMBOA) and 2,4-dihydroxy-1,4-benzoxazin-3-one (DIBOA) that, due to their inherent instability once released, spontaneously degrade to the more stable corresponding benzoxazolinones, 6-methoxy-2-benzoxazolinone (MBOA) and 2-benzoxazolinone (BOA), respectively. The first step in the detoxification of benzoxazolinones involves the hydrolysis of the cyclic ester bond of benzoxazolinones by the FDB1 cluster gamma-lactamase MBL1 to aminophenols. MBL1 is able to convert BOA into 2-aminophenol (2-AP), as well as MBOA into 5-methoxy-2-aminophenol (2-AMP). The FDB2 cluster N-malonyltransferase FDB2/NAT1 then metabolizes aminophenols via N-malonylation to non-toxic malonamic acids. FDB2/NAT1 converts 2-AP into N-(2-hydroxyphenyl) malonamic acid (HPMA) and 2-AMP into N-(2-hydroxy-4-methoxyphenyl) malonamic acid (HMPMA). The duplicated dienlactone hydrolases DLH1 and DLH2 may provide redundant function for hydrolyzing the lactone moiety in the BOA molecule. The roles of the amidases an other enzymes encoded by the 2 FDB clusters have not been identified so far. The sequence is that of Aldo-keto reductase FVEG_12638 from Gibberella moniliformis (strain M3125 / FGSC 7600) (Maize ear and stalk rot fungus).